The primary structure comprises 188 residues: GTP cyclohydrolase 1 (188 aa).

Residues cysteine 78, histidine 81, and cysteine 150 each contribute to the Zn(2+) site.

This sequence belongs to the GTP cyclohydrolase I family. Toroid-shaped homodecamer, composed of two pentamers of five dimers.

It carries out the reaction GTP + H2O = 7,8-dihydroneopterin 3'-triphosphate + formate + H(+). The protein operates within cofactor biosynthesis; 7,8-dihydroneopterin triphosphate biosynthesis; 7,8-dihydroneopterin triphosphate from GTP: step 1/1. The polypeptide is GTP cyclohydrolase 1 (Geobacillus kaustophilus (strain HTA426)).